The primary structure comprises 115 residues: Toxin-like structure LSTX-R1 (115 aa).

The first 18 residues, 1–18, serve as a signal peptide directing secretion; sequence MKLSLIIIATSLVIAVVA. A propeptide spanning residues 19 to 51 is cleaved from the precursor; the sequence is FPSKDSAATDFDKTESLENVEERVETALDERPR.

Belongs to the neurotoxin 25 family. F7 subfamily. Contains 4 disulfide bonds. Expressed by the venom gland.

The protein resides in the secreted. This chain is Toxin-like structure LSTX-R1, found in Lycosa singoriensis (Wolf spider).